We begin with the raw amino-acid sequence, 590 residues long: Aspartate--tRNA(Asp/Asn) ligase (590 aa).

An L-aspartate-binding site is contributed by Glu-175. The segment at 199–202 is aspartate; that stretch reads QQYK. Residues Arg-221 and His-450 each contribute to the L-aspartate site. 221-223 is an ATP binding site; sequence RDE. Position 484 (Glu-484) interacts with ATP. Arg-491 provides a ligand contact to L-aspartate. Residue 536 to 539 coordinates ATP; it reads GIDR.

The protein belongs to the class-II aminoacyl-tRNA synthetase family. Type 1 subfamily. As to quaternary structure, homodimer.

The protein localises to the cytoplasm. The enzyme catalyses tRNA(Asx) + L-aspartate + ATP = L-aspartyl-tRNA(Asx) + AMP + diphosphate. Aspartyl-tRNA synthetase with relaxed tRNA specificity since it is able to aspartylate not only its cognate tRNA(Asp) but also tRNA(Asn). Reaction proceeds in two steps: L-aspartate is first activated by ATP to form Asp-AMP and then transferred to the acceptor end of tRNA(Asp/Asn). This chain is Aspartate--tRNA(Asp/Asn) ligase, found in Azorhizobium caulinodans (strain ATCC 43989 / DSM 5975 / JCM 20966 / LMG 6465 / NBRC 14845 / NCIMB 13405 / ORS 571).